Consider the following 141-residue polypeptide: Large ribosomal subunit protein uL11 (141 aa).

Belongs to the universal ribosomal protein uL11 family. Part of the ribosomal stalk of the 50S ribosomal subunit. Interacts with L10 and the large rRNA to form the base of the stalk. L10 forms an elongated spine to which L12 dimers bind in a sequential fashion forming a multimeric L10(L12)X complex. Post-translationally, one or more lysine residues are methylated.

Functionally, forms part of the ribosomal stalk which helps the ribosome interact with GTP-bound translation factors. The protein is Large ribosomal subunit protein uL11 of Latilactobacillus sakei subsp. sakei (strain 23K) (Lactobacillus sakei subsp. sakei).